The primary structure comprises 191 residues: dCTP deaminase (191 aa).

Residues 112-117 (KSTYAR), 136-138 (TLE), Gln-157, Tyr-173, and Gln-183 each bind dCTP. Catalysis depends on Glu-138, which acts as the Proton donor/acceptor.

The protein belongs to the dCTP deaminase family. As to quaternary structure, homotrimer.

The enzyme catalyses dCTP + H2O + H(+) = dUTP + NH4(+). The protein operates within pyrimidine metabolism; dUMP biosynthesis; dUMP from dCTP (dUTP route): step 1/2. Catalyzes the deamination of dCTP to dUTP. This is dCTP deaminase from Psychrobacter cryohalolentis (strain ATCC BAA-1226 / DSM 17306 / VKM B-2378 / K5).